Consider the following 241-residue polypeptide: 15,16-dihydrobiliverdin:ferredoxin oxidoreductase (241 aa).

The disordered stretch occupies residues 16–35; it reads RGGQPAAVPEGLEHCHSSKS.

Belongs to the HY2 family.

It catalyses the reaction 15,16-dihydrobiliverdin + oxidized 2[4Fe-4S]-[ferredoxin] = biliverdin IXalpha + reduced 2[4Fe-4S]-[ferredoxin] + 2 H(+). In terms of biological role, catalyzes the two-electron reduction of biliverdin IX-alpha at the C15 methine bridge. The protein is 15,16-dihydrobiliverdin:ferredoxin oxidoreductase of Synechococcus sp. (strain WH7803).